Reading from the N-terminus, the 491-residue chain is Glycogen synthase (491 aa).

Residue K15 participates in ADP-alpha-D-glucose binding.

Belongs to the glycosyltransferase 1 family. Bacterial/plant glycogen synthase subfamily.

The catalysed reaction is [(1-&gt;4)-alpha-D-glucosyl](n) + ADP-alpha-D-glucose = [(1-&gt;4)-alpha-D-glucosyl](n+1) + ADP + H(+). The protein operates within glycan biosynthesis; glycogen biosynthesis. Synthesizes alpha-1,4-glucan chains using ADP-glucose. The protein is Glycogen synthase of Hydrogenovibrio crunogenus (strain DSM 25203 / XCL-2) (Thiomicrospira crunogena).